The sequence spans 487 residues: Proline--tRNA ligase (487 aa).

This sequence belongs to the class-II aminoacyl-tRNA synthetase family. ProS type 3 subfamily. Homodimer.

The protein localises to the cytoplasm. The enzyme catalyses tRNA(Pro) + L-proline + ATP = L-prolyl-tRNA(Pro) + AMP + diphosphate. Its function is as follows. Catalyzes the attachment of proline to tRNA(Pro) in a two-step reaction: proline is first activated by ATP to form Pro-AMP and then transferred to the acceptor end of tRNA(Pro). This is Proline--tRNA ligase from Pyrobaculum calidifontis (strain DSM 21063 / JCM 11548 / VA1).